Consider the following 123-residue polypeptide: Large ribosomal subunit protein bL12 (123 aa).

Belongs to the bacterial ribosomal protein bL12 family. As to quaternary structure, homodimer. Part of the ribosomal stalk of the 50S ribosomal subunit. Forms a multimeric L10(L12)X complex, where L10 forms an elongated spine to which 2 to 4 L12 dimers bind in a sequential fashion. Binds GTP-bound translation factors.

In terms of biological role, forms part of the ribosomal stalk which helps the ribosome interact with GTP-bound translation factors. Is thus essential for accurate translation. This chain is Large ribosomal subunit protein bL12, found in Albidiferax ferrireducens (strain ATCC BAA-621 / DSM 15236 / T118) (Rhodoferax ferrireducens).